We begin with the raw amino-acid sequence, 135 residues long: Small ribosomal subunit protein uS11 (135 aa).

The protein belongs to the universal ribosomal protein uS11 family. In terms of assembly, part of the 30S ribosomal subunit. Interacts with proteins S7 and S18. Binds to IF-3.

Functionally, located on the platform of the 30S subunit, it bridges several disparate RNA helices of the 16S rRNA. Forms part of the Shine-Dalgarno cleft in the 70S ribosome. The chain is Small ribosomal subunit protein uS11 from Polynucleobacter necessarius subsp. necessarius (strain STIR1).